The chain runs to 106 residues: uncharacterized protein (106 aa).

The segment at 38-106 (KGNKKSKAAT…STHLPYHGSY (69 aa)) is disordered. 2 stretches are compositionally biased toward basic and acidic residues: residues 57 to 71 (TRQE…HRPE) and 82 to 96 (WKKE…KETS).

It localises to the mitochondrion. This is an uncharacterized protein from Arabidopsis thaliana (Mouse-ear cress).